Here is a 363-residue protein sequence, read N- to C-terminus: Peptide chain release factor 2 (363 aa).

Gln251 is subject to N5-methylglutamine.

This sequence belongs to the prokaryotic/mitochondrial release factor family. Post-translationally, methylated by PrmC. Methylation increases the termination efficiency of RF2.

The protein resides in the cytoplasm. Functionally, peptide chain release factor 2 directs the termination of translation in response to the peptide chain termination codons UGA and UAA. The chain is Peptide chain release factor 2 (prfB) from Helicobacter pylori (strain ATCC 700392 / 26695) (Campylobacter pylori).